The primary structure comprises 499 residues: MTVATGDLTDGSVGFAGHPQDSYDPEPDHECCERVVINISGLRFETQLKTLSQFPETLLGDPKKRMRYFDPLRNEYFFDRNRPSFDAILYFYQSGGRLRRPVNVPLDIFSEEIRFYELGEEAMEIFREDEGFIKEEERPLPDNEFQKQVWLLFEYPESSGPARIIAIISVTVILISIVSFCLETLPVFRDENEDMHGSGGNYYSYPNSTVRFQKSNTFTDPFFIVETLCIIWFSFEFLVRFLACPSKAVFFTNLMNIIDIVAIIPYFITLGTELAEKTEDGQQGQQAMSLAILRVIRLVRVFRIFKLSRHSKGLQILGQTLNASMRELGLLIFFLFIGVILFSSAVFFAEADERDSQFPSIPDAFWWAVVSMTTVGYGDMVPTTIGGKIVGSLCAIAGVLTIALPVPVIVSNFNYFYHRETEGEEQAQYLQVTSCPKIPSSPDLQKSRSASTLSKSDYMEIQEGVNHSNEDFREKNLKTANCTLGNTNYVNITKMLTDV.

The tract at residues 1-27 is disordered; it reads MTVATGDLTDGSVGFAGHPQDSYDPEP. A tetramerization domain region spans residues 1–125; the sequence is MTVATGDLTD…YELGEEAMEI (125 aa). The Cytoplasmic segment spans residues 1–160; that stretch reads MTVATGDLTD…LLFEYPESSG (160 aa). Residues 161–182 form a helical membrane-spanning segment; it reads PARIIAIISVTVILISIVSFCL. Residues 183-221 are Extracellular-facing; it reads ETLPVFRDENEDMHGSGGNYYSYPNSTVRFQKSNTFTDP. N-linked (GlcNAc...) asparagine glycosylation is present at N207. A helical membrane pass occupies residues 222-243; the sequence is FFIVETLCIIWFSFEFLVRFLA. The S-palmitoyl cysteine moiety is linked to residue C244. At 244 to 254 the chain is on the cytoplasmic side; sequence CPSKAVFFTNL. The chain crosses the membrane as a helical span at residues 255–275; that stretch reads MNIIDIVAIIPYFITLGTELA. Residues 276–289 are Extracellular-facing; the sequence is EKTEDGQQGQQAMS. A helical; Voltage-sensor membrane pass occupies residues 290-310; the sequence is LAILRVIRLVRVFRIFKLSRH. Residues 311–325 lie on the Cytoplasmic side of the membrane; the sequence is SKGLQILGQTLNASM. The tract at residues 312–325 is S4-S5 linker; it reads KGLQILGQTLNASM. Residues 326-347 traverse the membrane as a helical segment; that stretch reads RELGLLIFFLFIGVILFSSAVF. The Extracellular portion of the chain corresponds to 348 to 361; that stretch reads FAEADERDSQFPSI. Residues 362-373 constitute an intramembrane region (helical); the sequence is PDAFWWAVVSMT. The Selectivity filter motif lies at 374–379; sequence TVGYGD. The stretch at 374-381 is an intramembrane region; the sequence is TVGYGDMV. At 382 to 388 the chain is on the extracellular side; sequence PTTIGGK. Residues 389-417 form a helical membrane-spanning segment; sequence IVGSLCAIAGVLTIALPVPVIVSNFNYFY. The Cytoplasmic portion of the chain corresponds to 418–499; it reads HRETEGEEQA…VNITKMLTDV (82 aa). The short motif at 497 to 499 is the PDZ-binding element; it reads TDV.

It belongs to the potassium channel family. A (Shaker) (TC 1.A.1.2) subfamily. Kv1.2/KCNA2 sub-subfamily. Homotetramer and heterotetramer with other family members. In terms of tissue distribution, detected in tadpole brain and spinal cord.

It is found in the cell membrane. The catalysed reaction is K(+)(in) = K(+)(out). Voltage-gated potassium channel that mediates transmembrane potassium transport in excitable membranes, primarily in the brain and central nervous system. Prevents aberrant action potential firing and regulates neuronal output. Forms tetrameric potassium-selective channels through which potassium ions pass in accordance with their electrochemical gradient. The channel alternates between opened and closed conformations in response to the voltage difference across the membrane. Can form functional homotetrameric channels and heterotetrameric channels with other family members; the channels characteristics depend critically on the types of channel-forming alpha subunits that are present. Channel properties are modulated by cytoplasmic beta subunits that regulate the subcellular location of the alpha subunits. In vivo, membranes probably contain a mixture of heteromeric potassium channel complexes, making it difficult to assign currents observed in intact tissues to any particular potassium channel family member. Homotetrameric KCNA2 forms a delayed-rectifier potassium channel that opens in response to membrane depolarization, followed by slow spontaneous channel closure. Regulates neuronal excitability and plays a role as pacemaker in the regulation of neuronal action potentials. KCNA2-containing channels play a presynaptic role and prevent hyperexcitability and aberrant action potential firing. Response to toxins that are selective for KCNA2-containing potassium channels suggests that in Purkinje cells, dendritic subthreshold KCNA2-containing potassium channels prevent random spontaneous calcium spikes, suppressing dendritic hyperexcitability without hindering the generation of somatic action potentials, and thereby play an important role in motor coordination. Plays a role in the induction of long-term potentiation of neuron excitability in the CA3 layer of the hippocampus. The protein is Potassium voltage-gated channel subfamily A member 2 (kcna2) of Xenopus laevis (African clawed frog).